The sequence spans 304 residues: Sulfate adenylyltransferase subunit 2 (304 aa).

The protein belongs to the PAPS reductase family. CysD subfamily. As to quaternary structure, heterodimer composed of CysD, the smaller subunit, and CysN.

The catalysed reaction is sulfate + ATP + H(+) = adenosine 5'-phosphosulfate + diphosphate. Its pathway is sulfur metabolism; hydrogen sulfide biosynthesis; sulfite from sulfate: step 1/3. With CysN forms the ATP sulfurylase (ATPS) that catalyzes the adenylation of sulfate producing adenosine 5'-phosphosulfate (APS) and diphosphate, the first enzymatic step in sulfur assimilation pathway. APS synthesis involves the formation of a high-energy phosphoric-sulfuric acid anhydride bond driven by GTP hydrolysis by CysN coupled to ATP hydrolysis by CysD. This is Sulfate adenylyltransferase subunit 2 from Acinetobacter baylyi (strain ATCC 33305 / BD413 / ADP1).